A 288-amino-acid polypeptide reads, in one-letter code: MDGRISGSTQLLGLIGDPVAHSLSPAMHNAALAAMGENYCYVPFPVAPKHLAAAVAGLAAIGVRGFNVTIPHKQAILPLLDQIESRAAAVGAVNTVYPLPEGGWAGTNTDIDGFVQPLLGLEKGIPTLILGSGGAARAAIQGCLELGLGPVRVAGRSPNSLLALQQTWPQVETVNWAELNCYLSQTRLLVNTTPVGMHKPGSPAGQGLSPLSREQLGLLSPGAIVYDLIYVPDPTPLLRMAAELGHTPISGLEMLVHQGAKALSLWLGGKPVPVEVMRQAAQHQLAQV.

Shikimate contacts are provided by residues 22-24 and Thr69; that span reads SLS. Lys73 functions as the Proton acceptor in the catalytic mechanism. 2 residues coordinate shikimate: Asn94 and Asp110. NADP(+) contacts are provided by residues 131–135 and Leu228; that span reads GSGGA. A shikimate-binding site is contributed by Tyr230. Residue Gly251 coordinates NADP(+).

It belongs to the shikimate dehydrogenase family. Homodimer.

The enzyme catalyses shikimate + NADP(+) = 3-dehydroshikimate + NADPH + H(+). The protein operates within metabolic intermediate biosynthesis; chorismate biosynthesis; chorismate from D-erythrose 4-phosphate and phosphoenolpyruvate: step 4/7. In terms of biological role, involved in the biosynthesis of the chorismate, which leads to the biosynthesis of aromatic amino acids. Catalyzes the reversible NADPH linked reduction of 3-dehydroshikimate (DHSA) to yield shikimate (SA). The polypeptide is Shikimate dehydrogenase (NADP(+)) (Synechococcus sp. (strain JA-2-3B'a(2-13)) (Cyanobacteria bacterium Yellowstone B-Prime)).